A 361-amino-acid chain; its full sequence is Molybdenum import ATP-binding protein ModC (361 aa).

The ABC transporter domain maps to 1 to 228 (MLNINIEKQF…EQMRPWVPLQ (228 aa)). Position 31–38 (31–38 (GRSGAGKT)) interacts with ATP. The region spanning 289–356 (GSSIRNLLRG…IKGVTMTQMD (68 aa)) is the Mop domain.

Belongs to the ABC transporter superfamily. Molybdate importer (TC 3.A.1.8) family. The complex is composed of two ATP-binding proteins (ModC), two transmembrane proteins (ModB) and a solute-binding protein (ModA).

Its subcellular location is the cell inner membrane. It carries out the reaction molybdate(out) + ATP + H2O = molybdate(in) + ADP + phosphate + H(+). In terms of biological role, part of the ABC transporter complex ModABC involved in molybdenum import. Responsible for energy coupling to the transport system. This is Molybdenum import ATP-binding protein ModC from Shewanella sp. (strain MR-4).